A 125-amino-acid chain; its full sequence is MSLLRHSLQALPALCLCVLVLACIGACQSEAHEGTPSPPPEQKTRRWNLVQSRMKELLEPAVTRTRDRWQWLWNLSILRGFIQTYYDDHLRDLGPRTKTWLLESKDTLLNKTYSLCPRLLCTDKN.

The first 27 residues, 1-27 (MSLLRHSLQALPALCLCVLVLACIGAC), serve as a signal peptide directing secretion.

The protein belongs to the apolipoprotein C4 family.

The protein localises to the secreted. Its function is as follows. May participate in lipoprotein metabolism. The polypeptide is Apolipoprotein C-IV (APOC4) (Ateles geoffroyi (Black-handed spider monkey)).